Consider the following 316-residue polypeptide: Probable peptidyl-tRNA hydrolase 2 (316 aa).

A disordered region spans residues 1-127 (MSENIPDIDP…SHPVDPQEPN (127 aa)). The span at 44 to 53 (PTPSSVTVDN) shows a compositional bias: polar residues. Over residues 75-89 (IPEVPIPSSAISISS) the composition is skewed to low complexity. The region spanning 128 to 169 (EVNNEYLAHLLDLGFDEYTAVLALKRTNSAGVEQAVAWIVER) is the UBA domain. Residues 170-193 (SNESDFDEDSSSSENEADEEMGAV) form a disordered region. Positions 173–190 (SDFDEDSSSSENEADEEM) are enriched in acidic residues.

It belongs to the PTH2 family.

It carries out the reaction an N-acyl-L-alpha-aminoacyl-tRNA + H2O = an N-acyl-L-amino acid + a tRNA + H(+). Its function is as follows. The natural substrate for this enzyme may be peptidyl-tRNAs which drop off the ribosome during protein synthesis. This chain is Probable peptidyl-tRNA hydrolase 2, found in Caenorhabditis elegans.